Consider the following 224-residue polypeptide: Uracil-DNA glycosylase (224 aa).

D64 (proton acceptor) is an active-site residue.

It belongs to the uracil-DNA glycosylase (UDG) superfamily. UNG family.

Its subcellular location is the cytoplasm. It catalyses the reaction Hydrolyzes single-stranded DNA or mismatched double-stranded DNA and polynucleotides, releasing free uracil.. Functionally, excises uracil residues from the DNA which can arise as a result of misincorporation of dUMP residues by DNA polymerase or due to deamination of cytosine. The sequence is that of Uracil-DNA glycosylase from Geobacillus sp. (strain WCH70).